A 370-amino-acid chain; its full sequence is DNA primase large subunit PriL (370 aa).

Positions 268, 341, 350, and 354 each coordinate [4Fe-4S] cluster.

It belongs to the eukaryotic-type primase large subunit family. In terms of assembly, heterodimer of a small subunit (PriS) and a large subunit (PriL). [4Fe-4S] cluster is required as a cofactor.

Functionally, regulatory subunit of DNA primase, an RNA polymerase that catalyzes the synthesis of short RNA molecules used as primers for DNA polymerase during DNA replication. Stabilizes and modulates the activity of the small subunit, increasing the rate of DNA synthesis, and conferring RNA synthesis capability. The DNA polymerase activity may enable DNA primase to also catalyze primer extension after primer synthesis. May also play a role in DNA repair. The chain is DNA primase large subunit PriL from Archaeoglobus fulgidus (strain ATCC 49558 / DSM 4304 / JCM 9628 / NBRC 100126 / VC-16).